Here is a 288-residue protein sequence, read N- to C-terminus: Pantothenate synthetase (288 aa).

30-37 serves as a coordination point for ATP; that stretch reads MGALHEGH. The active-site Proton donor is the His-37. Gln-61 contacts (R)-pantoate. Gln-61 lines the beta-alanine pocket. 147–150 contacts ATP; that stretch reads GEKD. (R)-pantoate is bound at residue Gln-153. Residues Leu-176 and 184–187 each bind ATP; that span reads ISSR.

The protein belongs to the pantothenate synthetase family. Homodimer.

It is found in the cytoplasm. The enzyme catalyses (R)-pantoate + beta-alanine + ATP = (R)-pantothenate + AMP + diphosphate + H(+). It participates in cofactor biosynthesis; (R)-pantothenate biosynthesis; (R)-pantothenate from (R)-pantoate and beta-alanine: step 1/1. Catalyzes the condensation of pantoate with beta-alanine in an ATP-dependent reaction via a pantoyl-adenylate intermediate. In Prosthecochloris aestuarii (strain DSM 271 / SK 413), this protein is Pantothenate synthetase.